A 148-amino-acid polypeptide reads, in one-letter code: FAD synthase (148 aa).

Residues 14–15 (TF), 19–22 (HPGH), and Asp-97 each bind ATP.

The protein belongs to the archaeal FAD synthase family. In terms of assembly, homodimer. A divalent metal cation is required as a cofactor.

The catalysed reaction is FMN + ATP + H(+) = FAD + diphosphate. It participates in cofactor biosynthesis; FAD biosynthesis; FAD from FMN: step 1/1. Functionally, catalyzes the transfer of the AMP portion of ATP to flavin mononucleotide (FMN) to produce flavin adenine dinucleotide (FAD) coenzyme. This Natrialba magadii (strain ATCC 43099 / DSM 3394 / CCM 3739 / CIP 104546 / IAM 13178 / JCM 8861 / NBRC 102185 / NCIMB 2190 / MS3) (Natronobacterium magadii) protein is FAD synthase.